A 202-amino-acid polypeptide reads, in one-letter code: NADH-quinone oxidoreductase subunit C (202 aa).

Belongs to the complex I 30 kDa subunit family. As to quaternary structure, NDH-1 is composed of 14 different subunits. Subunits NuoB, C, D, E, F, and G constitute the peripheral sector of the complex.

The protein localises to the cell inner membrane. The catalysed reaction is a quinone + NADH + 5 H(+)(in) = a quinol + NAD(+) + 4 H(+)(out). In terms of biological role, NDH-1 shuttles electrons from NADH, via FMN and iron-sulfur (Fe-S) centers, to quinones in the respiratory chain. The immediate electron acceptor for the enzyme in this species is believed to be ubiquinone. Couples the redox reaction to proton translocation (for every two electrons transferred, four hydrogen ions are translocated across the cytoplasmic membrane), and thus conserves the redox energy in a proton gradient. This is NADH-quinone oxidoreductase subunit C from Albidiferax ferrireducens (strain ATCC BAA-621 / DSM 15236 / T118) (Rhodoferax ferrireducens).